Here is a 948-residue protein sequence, read N- to C-terminus: RNA polymerase-associated protein RapA (948 aa).

The Helicase ATP-binding domain occupies 164–332 (EVADRIAPRV…FARLRLLDPN (169 aa)). Position 177 to 184 (177 to 184 (DEVGLGKT)) interacts with ATP. Residues 278 to 281 (DEAH) carry the DEAH box motif. In terms of domain architecture, Helicase C-terminal spans 473–627 (RVEWLIDTLK…TCPTGNALQH (155 aa)).

The protein belongs to the SNF2/RAD54 helicase family. RapA subfamily. As to quaternary structure, interacts with the RNAP. Has a higher affinity for the core RNAP than for the holoenzyme. Its ATPase activity is stimulated by binding to RNAP.

In terms of biological role, transcription regulator that activates transcription by stimulating RNA polymerase (RNAP) recycling in case of stress conditions such as supercoiled DNA or high salt concentrations. Probably acts by releasing the RNAP, when it is trapped or immobilized on tightly supercoiled DNA. Does not activate transcription on linear DNA. Probably not involved in DNA repair. This is RNA polymerase-associated protein RapA from Pseudomonas syringae pv. tomato (strain ATCC BAA-871 / DC3000).